A 307-amino-acid polypeptide reads, in one-letter code: MATTSTTTKLSVLCCSFISSPLVDSPPSLAFFSPIPRFLTVRIATSFRSSSRFPATKIRKSSLAAVMFPENSVLSDVCAFGVTSIVAFSCLGFWGEIGKRGIFDQKLIRKLVHINIGLVFMLCWPLFSSGIQGALFASLVPGLNIVRMLLLGLGVYHDEGTIKSMSRHGDRRELLKGPLYYVLSITSACIYYWKSSPIAIAVICNLCAGDGMADIVGRRFGTEKLPYNKNKSFAGSIGMATAGFLASVAYMYYFASFGYIEDSGGMILRFLVISIASALVESLPISTDIDDNLTISLTSALAGFLLF.

Residues 1-65 (MATTSTTTKL…TKIRKSSLAA (65 aa)) constitute a chloroplast transit peptide. 7 helical membrane-spanning segments follow: residues 77–97 (VCAF…WGEI), 116–136 (IGLV…GALF), 137–157 (ASLV…GVYH), 177–194 (GPLY…YYWK), 197–217 (PIAI…DIVG), 237–257 (IGMA…FASF), and 265–285 (GMIL…SLPI).

Belongs to the polyprenol kinase family.

It localises to the plastid. It is found in the chloroplast membrane. The catalysed reaction is (2E,6E)-farnesol + CTP = (2E,6E)-farnesyl phosphate + CDP + H(+). It catalyses the reaction (2E,6E)-farnesol + ATP = (2E,6E)-farnesyl phosphate + ADP + H(+). The enzyme catalyses (2E)-geraniol + ATP = (2E)-geranyl phosphate + ADP + H(+). It carries out the reaction (2E,6E,10E)-geranylgeraniol + ATP = (2E,6E,10E)-geranylgeranyl phosphate + ADP + H(+). Kinase involved in negative regulation of abscisic acid (ABA) signaling. Substrate preference is farnesol &gt; geraniol &gt; geranylgeraniol, but has no activity with farnesyl phosphate. Can use CTP &gt; ATP &gt; GTP = UTP as phosphoryl donor. The protein is Farnesol kinase, chloroplastic of Arabidopsis thaliana (Mouse-ear cress).